A 498-amino-acid chain; its full sequence is Myotilin (498 aa).

Disordered stretches follow at residues 1 to 46 (MFNY…QPRQ), 64 to 151 (MSSS…HEIQ), and 202 to 241 (QDDSGAQDSQQHNSEHARLQVPTSQVRSRSTSRGDVNDQD). Arg-20 carries the post-translational modification Omega-N-methylarginine. The segment covering 29-43 (SSFSSQTKQSSIIIQ) has biased composition (low complexity). A compositionally biased stretch (polar residues) spans 77–138 (AGSNPGQRVT…INAKPSQTAN (62 aa)). Residues 79-150 (SNPGQRVTTT…PIPRTPDHEI (72 aa)) are necessary for interaction with ACTN1. Positions 202–212 (QDDSGAQDSQQ) are enriched in low complexity. The interval 215 to 493 (SEHARLQVPT…QRLAAQSGLY (279 aa)) is necessary for interaction with FLNC. The interval 215–498 (SEHARLQVPT…QSGLYESEEL (284 aa)) is necessary for interaction with ACTA1. Positions 222–235 (VPTSQVRSRSTSRG) are enriched in polar residues. Ig-like C2-type domains are found at residues 250–335 (PRFI…ATFT) and 349–441 (PMFI…LDVT).

It belongs to the myotilin/palladin family. Homodimer. Interacts with ACTA1, ACTN1, FLNA, FLNB, FLNC and MYOZ2. Interacts with the C-terminal region of MYOZ1. In terms of tissue distribution, expressed in skeletal muscle (at protein level). Expressed in skeletal muscle, heart, bone marrow and thyroid gland.

It is found in the cell membrane. Its subcellular location is the sarcolemma. The protein resides in the cytoplasm. It localises to the cytoskeleton. The protein localises to the myofibril. It is found in the sarcomere. Its subcellular location is the z line. Its function is as follows. Component of a complex of multiple actin cross-linking proteins. Involved in the control of myofibril assembly and stability at the Z lines in muscle cells. This chain is Myotilin (MYOT), found in Homo sapiens (Human).